The primary structure comprises 193 residues: MGWVWKDDDEQGGHVNPSAADISPRLDGDRCSTRKVVRTQCKTEEVEPGKFIRKCEKTEEVLRDCVGRPIEVVQSNKEYTEDDVTDQVMKGSVSFGSADNGAFNFPGLQHDIDEIEHNFLGGLSRFFEAAEDMKNGFFSSFGIPHIFDEGPSTSLPSPRREIPIDSPRQLEAFQKAYGTKSGEVDLSGLARDV.

Positions 1–27 (MGWVWKDDDEQGGHVNPSAADISPRLD) are disordered.

In terms of assembly, interacts with FRAA1E, FRAA2 and FRAA3.

In Fragaria ananassa (Strawberry), this protein is Fra a 1-associated protein.